The chain runs to 269 residues: Ethylene-responsive transcription factor ERN1 (269 aa).

The segment covering 1-15 has biased composition (polar residues); it reads MEIQFQQPNLQQHQK. Disordered regions lie at residues 1–36 and 128–157; these read MEIQ…NKFV and DVPA…LSSG. A DNA-binding region (AP2/ERF) is located at residues 34-91; sequence KFVGVRQRPSGRWVAEIKDTTQKIRMWLGTFETAEEAARAYDEAACLLRGSNTRTNFI. Over residues 128–146 the composition is skewed to low complexity; sequence DVPAPSASTTSTSSNTSNS.

Belongs to the AP2/ERF transcription factor family. ERF subfamily.

It localises to the nucleus. Its function is as follows. Transcription factor involved in the symbiotic nodule signaling pathway in response to rhizobial stimulation. Functions as a transcriptional regulator required for root infection by symbiotic rhizobia, infection thread (IT) formation, and nodule development. May coordinate these processes. Functions downstream of the CCAMK-CYCLOPS complex. Probably not involved in arbuscular mycorrhizal (AM) symbiosis. This chain is Ethylene-responsive transcription factor ERN1, found in Lotus japonicus (Lotus corniculatus var. japonicus).